A 279-amino-acid chain; its full sequence is Large ribosomal subunit protein uL2 (279 aa).

The interval V223–K279 is disordered. Basic residues predominate over residues I268–K279.

Belongs to the universal ribosomal protein uL2 family. As to quaternary structure, part of the 50S ribosomal subunit. Forms a bridge to the 30S subunit in the 70S ribosome.

In terms of biological role, one of the primary rRNA binding proteins. Required for association of the 30S and 50S subunits to form the 70S ribosome, for tRNA binding and peptide bond formation. It has been suggested to have peptidyltransferase activity; this is somewhat controversial. Makes several contacts with the 16S rRNA in the 70S ribosome. The sequence is that of Large ribosomal subunit protein uL2 from Cytophaga hutchinsonii (strain ATCC 33406 / DSM 1761 / CIP 103989 / NBRC 15051 / NCIMB 9469 / D465).